We begin with the raw amino-acid sequence, 180 residues long: Secreted RxLR effector protein 19 (180 aa).

The signal sequence occupies residues 1-19; it reads MKLLLRALATFVLLNGVDS. The Jacalin-type lectin domain maps to 25–171; sequence FQKCNVTGGP…IFALGALWGP (147 aa). The RxLR-dEER motif lies at 52 to 77; sequence RALRLCGVDFVDGIGVTIWDLSVEEN.

It belongs to the RxLR effector family.

The protein localises to the secreted. It is found in the host cytoplasm. The protein resides in the host nucleus. Effector that partially suppresses the tobacco programmed cell death induced by cell death-inducing proteins. The sequence is that of Secreted RxLR effector protein 19 from Plasmopara viticola (Downy mildew of grapevine).